A 184-amino-acid polypeptide reads, in one-letter code: Envelope protein 169 (184 aa).

Over 1–6 (MKKYIK) the chain is Intravirion. Residues 7–27 (MYLVLLIAIILFITILVIFLI) traverse the membrane as a helical segment. The Virion surface portion of the chain corresponds to 28–184 (SGLFYPEQNP…TVMAIPRKVL (157 aa)).

This sequence belongs to the asfivirus envelope protein p22 family.

The protein resides in the virion membrane. The protein localises to the host cell membrane. The polypeptide is Envelope protein 169 (Ornithodoros (relapsing fever ticks)).